We begin with the raw amino-acid sequence, 609 residues long: Tyrosine-protein kinase transforming protein Fes (609 aa).

Disordered regions lie at residues 1–20 (AARA…PQGH) and 152–208 (RDSA…GGRT). Residues 8-174 (MGFSSELCSP…SKDKDRDKAK (167 aa)) form the F-BAR; degenerate domain. Composition is skewed to basic and acidic residues over residues 160 to 175 (KYQE…KAKL) and 190 to 206 (QDDR…REGG). In terms of domain architecture, SH2 spans 247–336 (WYHGALPRAE…KSGIVLNRAV (90 aa)). One can recognise a Protein kinase domain in the interval 348-609 (LVLGEQIGRG…ELQSIRKRHR (262 aa)). ATP-binding positions include 354–362 (IGRGNFGEV) and K377. D470 serves as the catalytic Proton acceptor. Residue Y500 is modified to Phosphotyrosine; by autocatalysis.

This sequence belongs to the protein kinase superfamily. Tyr protein kinase family. Fes/fps subfamily.

It catalyses the reaction L-tyrosyl-[protein] + ATP = O-phospho-L-tyrosyl-[protein] + ADP + H(+). The chain is Tyrosine-protein kinase transforming protein Fes (V-FES) from Felidae (cat family).